The sequence spans 140 residues: Putative esterase MT1895 (140 aa).

This sequence belongs to the thioesterase PaaI family.

This is Putative esterase MT1895 from Mycobacterium tuberculosis (strain CDC 1551 / Oshkosh).